The chain runs to 485 residues: Kynureninase 1 (485 aa).

Pyridoxal 5'-phosphate contacts are provided by residues leucine 155, threonine 156, 183–186 (FPSD), aspartate 267, histidine 270, and tyrosine 292. N6-(pyridoxal phosphate)lysine is present on lysine 293. Positions 330 and 358 each coordinate pyridoxal 5'-phosphate.

It belongs to the kynureninase family. Homodimer. Pyridoxal 5'-phosphate is required as a cofactor.

Its subcellular location is the cytoplasm. The enzyme catalyses L-kynurenine + H2O = anthranilate + L-alanine + H(+). The catalysed reaction is 3-hydroxy-L-kynurenine + H2O = 3-hydroxyanthranilate + L-alanine + H(+). It participates in amino-acid degradation; L-kynurenine degradation; L-alanine and anthranilate from L-kynurenine: step 1/1. It functions in the pathway cofactor biosynthesis; NAD(+) biosynthesis; quinolinate from L-kynurenine: step 2/3. Functionally, catalyzes the cleavage of L-kynurenine (L-Kyn) and L-3-hydroxykynurenine (L-3OHKyn) into anthranilic acid (AA) and 3-hydroxyanthranilic acid (3-OHAA), respectively. This is Kynureninase 1 (kyn-1) from Neurospora crassa (strain ATCC 24698 / 74-OR23-1A / CBS 708.71 / DSM 1257 / FGSC 987).